The primary structure comprises 519 residues: Chaperone SurA (519 aa).

Residues 1-31 form the signal peptide; the sequence is MMRSLHSLRRMSGTVLALMLAAGLPLSAAQA. Composition is skewed to low complexity over residues 31–45 and 197–207; these read AQPA…QKPA and PAAAQATRAPA. 2 disordered regions span residues 31 to 50 and 196 to 221; these read AQPA…PAPS and NPAA…PAQS. The PpiC 1 domain occupies 223-324; it reads PAMLVLAQIL…NGFHILKVVD (102 aa). Residues 328 to 361 are disordered; the sequence is GGQPAQAARPAPAPAPQQPSSFQEGPSVAAPQGP. The region spanning 364–463 is the PpiC 2 domain; that stretch reads VTQTHARHIL…FGWHLIQVLE (100 aa).

It localises to the periplasm. The enzyme catalyses [protein]-peptidylproline (omega=180) = [protein]-peptidylproline (omega=0). In terms of biological role, chaperone involved in the correct folding and assembly of outer membrane proteins. Recognizes specific patterns of aromatic residues and the orientation of their side chains, which are found more frequently in integral outer membrane proteins. May act in both early periplasmic and late outer membrane-associated steps of protein maturation. The protein is Chaperone SurA of Bordetella parapertussis (strain 12822 / ATCC BAA-587 / NCTC 13253).